The chain runs to 493 residues: Cobyric acid synthase (493 aa).

The GATase cobBQ-type domain maps to 260–427; that stretch reads RLSVAAIRLP…RHGYLQDDPA (168 aa). The active site involves His-419.

Belongs to the CobB/CobQ family. CobQ subfamily.

The protein operates within cofactor biosynthesis; adenosylcobalamin biosynthesis. Catalyzes amidations at positions B, D, E, and G on adenosylcobyrinic A,C-diamide. NH(2) groups are provided by glutamine, and one molecule of ATP is hydrogenolyzed for each amidation. This chain is Cobyric acid synthase, found in Corynebacterium efficiens (strain DSM 44549 / YS-314 / AJ 12310 / JCM 11189 / NBRC 100395).